The primary structure comprises 110 residues: UPF0102 protein HH_1751 (110 aa).

This sequence belongs to the UPF0102 family.

This Helicobacter hepaticus (strain ATCC 51449 / 3B1) protein is UPF0102 protein HH_1751.